We begin with the raw amino-acid sequence, 87 residues long: Small ribosomal subunit protein uS17 (87 aa).

This sequence belongs to the universal ribosomal protein uS17 family. As to quaternary structure, part of the 30S ribosomal subunit.

Its function is as follows. One of the primary rRNA binding proteins, it binds specifically to the 5'-end of 16S ribosomal RNA. This chain is Small ribosomal subunit protein uS17, found in Bacillus thuringiensis (strain Al Hakam).